A 439-amino-acid chain; its full sequence is 3-phosphoshikimate 1-carboxyvinyltransferase (439 aa).

The 3-phosphoshikimate site is built by lysine 31, serine 32, and arginine 36. Residue lysine 31 coordinates phosphoenolpyruvate. Residues glycine 103 and arginine 131 each contribute to the phosphoenolpyruvate site. Residues serine 175, glutamine 177, aspartate 322, and lysine 349 each coordinate 3-phosphoshikimate. Glutamine 177 contacts phosphoenolpyruvate. The active-site Proton acceptor is aspartate 322. 2 residues coordinate phosphoenolpyruvate: arginine 353 and arginine 397.

The protein belongs to the EPSP synthase family. As to quaternary structure, monomer.

It localises to the cytoplasm. The enzyme catalyses 3-phosphoshikimate + phosphoenolpyruvate = 5-O-(1-carboxyvinyl)-3-phosphoshikimate + phosphate. The protein operates within metabolic intermediate biosynthesis; chorismate biosynthesis; chorismate from D-erythrose 4-phosphate and phosphoenolpyruvate: step 6/7. Its function is as follows. Catalyzes the transfer of the enolpyruvyl moiety of phosphoenolpyruvate (PEP) to the 5-hydroxyl of shikimate-3-phosphate (S3P) to produce enolpyruvyl shikimate-3-phosphate and inorganic phosphate. The sequence is that of 3-phosphoshikimate 1-carboxyvinyltransferase from Clostridium tetani (strain Massachusetts / E88).